The sequence spans 298 residues: Aspartate carbamoyltransferase catalytic subunit (298 aa).

Residues Arg-53 and Thr-54 each contribute to the carbamoyl phosphate site. An L-aspartate-binding site is contributed by Lys-81. Carbamoyl phosphate is bound by residues Arg-103, His-132, and Gln-135. L-aspartate-binding residues include Arg-166 and Arg-218. 2 residues coordinate carbamoyl phosphate: Gly-259 and Pro-260.

This sequence belongs to the aspartate/ornithine carbamoyltransferase superfamily. ATCase family. In terms of assembly, heterododecamer (2C3:3R2) of six catalytic PyrB chains organized as two trimers (C3), and six regulatory PyrI chains organized as three dimers (R2).

It catalyses the reaction carbamoyl phosphate + L-aspartate = N-carbamoyl-L-aspartate + phosphate + H(+). It participates in pyrimidine metabolism; UMP biosynthesis via de novo pathway; (S)-dihydroorotate from bicarbonate: step 2/3. Its function is as follows. Catalyzes the condensation of carbamoyl phosphate and aspartate to form carbamoyl aspartate and inorganic phosphate, the committed step in the de novo pyrimidine nucleotide biosynthesis pathway. This is Aspartate carbamoyltransferase catalytic subunit from Anaplasma marginale (strain St. Maries).